Here is a 92-residue protein sequence, read N- to C-terminus: MARTVNCVYLNKEADGLDFQLYPGDLGKRIFDNISKEAWGLWQKKQTMLINEKKLNMMNVDDRKFLEEQMTSFLFEGKDVEIEGFVPEKDQD.

The protein belongs to the Fe(2+)-trafficking protein family.

Could be a mediator in iron transactions between iron acquisition and iron-requiring processes, such as synthesis and/or repair of Fe-S clusters in biosynthetic enzymes. The protein is Probable Fe(2+)-trafficking protein of Shewanella sp. (strain W3-18-1).